Consider the following 883-residue polypeptide: HTH-type transcriptional regulator AlkS (883 aa).

The 66-residue stretch at 816–881 folds into the HTH luxR-type domain; sequence ENKAGDFLTL…QAIIEAERQG (66 aa). Residues 840–859 constitute a DNA-binding region (H-T-H motif); the sequence is NKQIATKMYVTEDAIKWHMR.

It functions in the pathway hydrocarbon metabolism; alkane degradation. Its function is as follows. May act as a transcriptional regulator of AlkB. This is HTH-type transcriptional regulator AlkS (alkS) from Pseudomonas putida (Arthrobacter siderocapsulatus).